We begin with the raw amino-acid sequence, 480 residues long: DnaJ homolog subfamily A member 3, mitochondrial (480 aa).

Omega-N-methylarginine; by CARM1 is present on arginine 58. Residues 93–158 enclose the J domain; sequence DYYQILGVPR…VKRKQYDAYG (66 aa). The residue at position 134 (lysine 134) is an N6-acetyllysine. The segment at 223–301 adopts a CR-type zinc-finger fold; it reads GVNKEFTVNI…CRGAGQAKQK (79 aa). Residue cysteine 236 participates in Zn(2+) binding. CXXCXGXG motif repeat units lie at residues 236-243, 253-260, 275-282, and 289-296; these read CERCDGKG, CHYCGGSG, CRRCGGRG, and CVVCRGAG. An Omega-N-methylarginine; by CARM1 modification is found at arginine 238. Zn(2+) contacts are provided by cysteine 239, cysteine 253, cysteine 256, cysteine 275, cysteine 278, cysteine 289, and cysteine 292. Position 293 is an omega-N-methylarginine; by CARM1 (arginine 293). Residue serine 398 is modified to Phosphoserine. Residues 437-468 form a disordered region; that stretch reads TVNGVTHTSTGGRTMDSSAGSKDRREAGEDNE. A compositionally biased stretch (polar residues) spans 439–456; that stretch reads NGVTHTSTGGRTMDSSAG.

In terms of assembly, interacts with JAK2, HSPA9B and IFN-gammaR2 chain. Interacts with Ras GTPase-activating protein 1 (RASA1). Isoform 2 interacts with MUSK (via the cytoplasmic domain). Tyrosine phosphorylated.

The protein localises to the mitochondrion matrix. Its subcellular location is the cytoplasm. It localises to the cytosol. The protein resides in the postsynaptic cell membrane. Modulates apoptotic signal transduction or effector structures within the mitochondrial matrix. Affect cytochrome C release from the mitochondria and caspase 3 activation, but not caspase 8 activation. Isoform 1 increases apoptosis triggered by both TNF and the DNA-damaging agent mytomycin C; in sharp contrast, isoform 2 suppresses apoptosis. Can modulate IFN-gamma-mediated transcriptional activity. Isoform 2 may play a role in neuromuscular junction development as an effector of the MUSK signaling pathway. This is DnaJ homolog subfamily A member 3, mitochondrial (Dnaja3) from Mus musculus (Mouse).